Here is a 544-residue protein sequence, read N- to C-terminus: Formate--tetrahydrofolate ligase (544 aa).

63 to 70 (TPAGEGKS) serves as a coordination point for ATP.

The protein belongs to the formate--tetrahydrofolate ligase family.

The catalysed reaction is (6S)-5,6,7,8-tetrahydrofolate + formate + ATP = (6R)-10-formyltetrahydrofolate + ADP + phosphate. Its pathway is one-carbon metabolism; tetrahydrofolate interconversion. The protein is Formate--tetrahydrofolate ligase of Fusobacterium nucleatum subsp. nucleatum (strain ATCC 25586 / DSM 15643 / BCRC 10681 / CIP 101130 / JCM 8532 / KCTC 2640 / LMG 13131 / VPI 4355).